Reading from the N-terminus, the 78-residue chain is Acyl carrier protein (78 aa).

A Carrier domain is found at 1–76; the sequence is MALFEDIQAV…DVVKYIEDNK (76 aa). Serine 36 is modified (O-(pantetheine 4'-phosphoryl)serine).

Belongs to the acyl carrier protein (ACP) family. 4'-phosphopantetheine is transferred from CoA to a specific serine of apo-ACP by AcpS. This modification is essential for activity because fatty acids are bound in thioester linkage to the sulfhydryl of the prosthetic group.

It is found in the cytoplasm. It participates in lipid metabolism; fatty acid biosynthesis. In terms of biological role, carrier of the growing fatty acid chain in fatty acid biosynthesis. In Helicobacter pylori (strain Shi470), this protein is Acyl carrier protein.